A 644-amino-acid polypeptide reads, in one-letter code: Exoribonuclease 2 (644 aa).

Positions 189-516 constitute an RNB domain; sequence REDLTALDFV…NHRLLKAVIK (328 aa). In terms of domain architecture, S1 motif spans 561 to 643; that stretch reads DTRFAAEIVD…ETRSIIARPV (83 aa).

The protein belongs to the RNR ribonuclease family. RNase II subfamily.

It is found in the cytoplasm. It carries out the reaction Exonucleolytic cleavage in the 3'- to 5'-direction to yield nucleoside 5'-phosphates.. Its function is as follows. Involved in mRNA degradation. Hydrolyzes single-stranded polyribonucleotides processively in the 3' to 5' direction. The polypeptide is Exoribonuclease 2 (Escherichia coli (strain SMS-3-5 / SECEC)).